We begin with the raw amino-acid sequence, 650 residues long: Chaperone protein DnaK (650 aa).

The residue at position 200 (Thr-200) is a Phosphothreonine; by autocatalysis. The disordered stretch occupies residues 614 to 635; it reads AGAAGAAGAAEGAAHAGGAQQA.

It belongs to the heat shock protein 70 family.

Its function is as follows. Acts as a chaperone. The chain is Chaperone protein DnaK from Burkholderia lata (strain ATCC 17760 / DSM 23089 / LMG 22485 / NCIMB 9086 / R18194 / 383).